A 442-amino-acid chain; its full sequence is tRNA modification GTPase MnmE (442 aa).

(6S)-5-formyl-5,6,7,8-tetrahydrofolate contacts are provided by R22, E79, and K119. The TrmE-type G domain maps to G216–A366. K(+) is bound at residue N226. Residues N226–S231, S245–T251, and D270–G273 each bind GTP. S230 contributes to the Mg(2+) binding site. Residues S245, I247, and T250 each contribute to the K(+) site. T251 provides a ligand contact to Mg(2+). Residue K442 coordinates (6S)-5-formyl-5,6,7,8-tetrahydrofolate.

It belongs to the TRAFAC class TrmE-Era-EngA-EngB-Septin-like GTPase superfamily. TrmE GTPase family. As to quaternary structure, homodimer. Heterotetramer of two MnmE and two MnmG subunits. It depends on K(+) as a cofactor.

The protein localises to the cytoplasm. In terms of biological role, exhibits a very high intrinsic GTPase hydrolysis rate. Involved in the addition of a carboxymethylaminomethyl (cmnm) group at the wobble position (U34) of certain tRNAs, forming tRNA-cmnm(5)s(2)U34. The sequence is that of tRNA modification GTPase MnmE from Mesomycoplasma hyopneumoniae (strain J / ATCC 25934 / NCTC 10110) (Mycoplasma hyopneumoniae).